A 300-amino-acid chain; its full sequence is Protoheme IX farnesyltransferase (300 aa).

The next 9 helical transmembrane spans lie at 24–44 (GLAI…IHEF), 46–66 (LETI…VGAS), 99–119 (AFTI…MINP), 122–142 (AMFG…LKTV), 145–165 (LSVF…WVAA), 176–196 (LFLI…WFLF), 220–240 (IVLY…GYTG), 244–264 (LTPV…VYAI), and 275–295 (AKTL…VYIL).

Belongs to the UbiA prenyltransferase family. Protoheme IX farnesyltransferase subfamily.

The protein localises to the cell inner membrane. It carries out the reaction heme b + (2E,6E)-farnesyl diphosphate + H2O = Fe(II)-heme o + diphosphate. Its pathway is porphyrin-containing compound metabolism; heme O biosynthesis; heme O from protoheme: step 1/1. Functionally, converts heme B (protoheme IX) to heme O by substitution of the vinyl group on carbon 2 of heme B porphyrin ring with a hydroxyethyl farnesyl side group. The chain is Protoheme IX farnesyltransferase from Flavobacterium psychrophilum (strain ATCC 49511 / DSM 21280 / CIP 103535 / JIP02/86).